Reading from the N-terminus, the 1342-residue chain is ATP-dependent RNA helicase TDRD9 (1342 aa).

Positions 31–63 are enriched in basic and acidic residues; sequence KAEAEDNATEVRSDKAFSELSSPEKEKSDDGNQ. The disordered stretch occupies residues 31-81; that stretch reads KAEAEDNATEVRSDKAFSELSSPEKEKSDDGNQRRKRAQLPTGPGTSPPSL. Residues 99 to 265 form the Helicase ATP-binding domain; sequence VSLIENNSVV…FGSPIRNQMN (167 aa). 112–119 is a binding site for ATP; that stretch reads GATGSGKT. The short motif at 211–214 is the DEAH box element; sequence DEVH. One can recognise a Helicase C-terminal domain in the interval 317–503; that stretch reads SLIQSFDEME…LLKVKLLDMG (187 aa). Residues 901–962 enclose the Tudor domain; sequence SLYPNLLCVA…RELPSDLMTP (62 aa).

Belongs to the DEAD box helicase family. DEAH subfamily.

It is found in the cytoplasm. The protein localises to the nucleus. It catalyses the reaction ATP + H2O = ADP + phosphate + H(+). ATP-binding RNA helicase which plays a central role during spermatogenesis by repressing transposable elements and preventing their mobilization, which is essential for the germline integrity. Acts via the piRNA metabolic process, which mediates the repression of transposable elements during meiosis by forming complexes composed of piRNAs and Piwi proteins and governs the methylation and subsequent repression of transposons. Acts downstream of piRNA biogenesis: exclusively required for transposon silencing in the nucleus, suggesting that it acts as a nuclear effector in the nucleus together with piwil4. The chain is ATP-dependent RNA helicase TDRD9 from Danio rerio (Zebrafish).